Reading from the N-terminus, the 431-residue chain is MITDRVSDYLEKIEKSDVNAFIDVNSEKVLKEAEELEKNDALKNKPLYGKIVAVKSNINVKGYKISCASKTLDNYIGTYDATVVKKLRSQGALIVGMTNMDEFASGSSGETSYFGPTKNPAAMDRIPGGSSSGSAAAVAADLCDMAIGSDTGGSIRNPASHCGIVGFKPSYGVVSRQGLCDLAMSFDQIGPLTKNAEDALVLTNAIKGIDRSDSTSLETPKFEKKDISNYKVGVVKEFMDVTDEKIRNEIEKGIEVFKDMGCKIVDLSYKYIDLALPTYYLINYVEFFSATRKYDGRRYGEFIEEACGEEVLRRILIGKHISEQEFSGKYYKKALQARKSMKKEMLGLFNSADLIVGPTVPKLPHKLGENLSPMEMYAYDVLTVPTNICGICSGVVRCGNISGVPVGLQIQGAPLEDEKVLSAMIEFEKNY.

Catalysis depends on charge relay system residues lysine 55 and serine 130. Serine 154 acts as the Acyl-ester intermediate in catalysis.

Belongs to the amidase family. GatA subfamily. Heterotrimer of A, B and C subunits.

It catalyses the reaction L-glutamyl-tRNA(Gln) + L-glutamine + ATP + H2O = L-glutaminyl-tRNA(Gln) + L-glutamate + ADP + phosphate + H(+). Its function is as follows. Allows the formation of correctly charged Gln-tRNA(Gln) through the transamidation of misacylated Glu-tRNA(Gln) in organisms which lack glutaminyl-tRNA synthetase. The reaction takes place in the presence of glutamine and ATP through an activated gamma-phospho-Glu-tRNA(Gln). This chain is Glutamyl-tRNA(Gln) amidotransferase subunit A, found in Methanococcus maripaludis (strain C7 / ATCC BAA-1331).